A 131-amino-acid chain; its full sequence is Transcriptional activator protein (131 aa).

Positions 13-28 (KAQHRIAKKRAVRRRR) match the Nuclear localization signal motif. Residues 33–52 (CGCSIYIHINCAKDGNGFTH) fold into a zinc finger. Residues 78 to 131 (DVQXGGSTLHAHKDIPHTNPVQPQPEESTKSSQSVPELPSLDGIDSSFWDDIFE) are disordered. The interval 117–131 (SLDGIDSSFWDDIFE) is transactivation.

The protein belongs to the geminiviridae transcriptional activator protein family. Monomer. Homodimer. Homooligomer. Self-interaction correlates with nuclear localization and efficient activation of transcription. Monomers suppress local silencing by interacting with and inactivating host adenosine kinase 2 (ADK2) in the cytoplasm. Interacts with and inhibits host SNF1 kinase. Binds to ssDNA. Post-translationally, phosphorylated.

Its subcellular location is the host nucleus. The protein localises to the host cytoplasm. Its function is as follows. Strong activator of the late viral genes promoters. Enhances the expression of the capsid protein and nuclear shuttle protein. Acts as a suppressor of RNA-mediated gene silencing, also known as post-transcriptional gene silencing (PTGS), a mechanism of plant viral defense that limits the accumulation of viral RNAs. Suppresses the host RNA silencing by inhibiting adenosine kinase 2 (ADK2), a kinase involved in a general methylation pathway. Also suppresses the host basal defense by interacting with and inhibiting SNF1 kinase, a key regulator of cell metabolism implicated in innate antiviral defense. Determines pathogenicity. This Cucurbita moschata (Winter crookneck squash) protein is Transcriptional activator protein.